Here is an 85-residue protein sequence, read N- to C-terminus: Hepcidin (85 aa).

The signal sequence occupies residues 1-24 (MKTFSVAVAVAVVLAFICLQESSA). Residues 25–64 (VPVTEVQELEEPMSNEYQEMPVESWKMPYNNRHKRHSSPG) constitute a propeptide that is removed on maturation. Cystine bridges form between Cys-66-Cys-83, Cys-69-Cys-72, Cys-70-Cys-79, and Cys-73-Cys-82.

In terms of tissue distribution, predominantly expressed in liver.

It localises to the secreted. Functionally, seems to act as a signaling molecule involved in the maintenance of iron homeostasis. Seems to be required in conjunction with HFE to regulate both intestinal iron absorption and iron storage in macrophages. Antimicrobial activity against Gram-negative bacteria such as E.coli. The sequence is that of Hepcidin (hamp) from Morone chrysops x Morone saxatilis (White bass x Striped bass).